The chain runs to 379 residues: Cobalt-precorrin-5B C(1)-methyltransferase (379 aa).

It belongs to the CbiD family.

It carries out the reaction Co-precorrin-5B + S-adenosyl-L-methionine = Co-precorrin-6A + S-adenosyl-L-homocysteine. It participates in cofactor biosynthesis; adenosylcobalamin biosynthesis; cob(II)yrinate a,c-diamide from sirohydrochlorin (anaerobic route): step 6/10. Catalyzes the methylation of C-1 in cobalt-precorrin-5B to form cobalt-precorrin-6A. The polypeptide is Cobalt-precorrin-5B C(1)-methyltransferase (Salmonella typhimurium (strain LT2 / SGSC1412 / ATCC 700720)).